The sequence spans 203 residues: Small ribosomal subunit protein uS4 (203 aa).

An S4 RNA-binding domain is found at 93–158 (LRLDNVVYRL…QQLVTRFLDL (66 aa)).

The protein belongs to the universal ribosomal protein uS4 family. As to quaternary structure, part of the 30S ribosomal subunit. Contacts protein S5. The interaction surface between S4 and S5 is involved in control of translational fidelity.

In terms of biological role, one of the primary rRNA binding proteins, it binds directly to 16S rRNA where it nucleates assembly of the body of the 30S subunit. With S5 and S12 plays an important role in translational accuracy. The protein is Small ribosomal subunit protein uS4 of Akkermansia muciniphila (strain ATCC BAA-835 / DSM 22959 / JCM 33894 / BCRC 81048 / CCUG 64013 / CIP 107961 / Muc).